The primary structure comprises 229 residues: PKHD-type hydroxylase BRADO6316 (229 aa).

The Fe2OG dioxygenase domain maps to 78-180; that stretch reads QIFPPLFNRY…RVASFFWLQS (103 aa). The Fe cation site is built by histidine 98, aspartate 100, and histidine 161. Arginine 171 lines the 2-oxoglutarate pocket.

It depends on Fe(2+) as a cofactor. The cofactor is L-ascorbate.

The protein is PKHD-type hydroxylase BRADO6316 of Bradyrhizobium sp. (strain ORS 278).